A 184-amino-acid chain; its full sequence is Photosystem I assembly protein Ycf4 (184 aa).

A run of 2 helical transmembrane segments spans residues 22–42 (FCWA…GTSS) and 57–77 (IIFF…LFIS).

The protein belongs to the Ycf4 family.

The protein localises to the plastid. The protein resides in the chloroplast thylakoid membrane. Its function is as follows. Seems to be required for the assembly of the photosystem I complex. The polypeptide is Photosystem I assembly protein Ycf4 (Arabis hirsuta (Hairy rock-cress)).